The following is a 337-amino-acid chain: Mitochondrial metalloendopeptidase OMA1 (337 aa).

Residues 1–68 (MFLNKYISNY…QPNPRDKRFQ (68 aa)) lie on the Mitochondrial matrix side of the membrane. Residues 69-89 (WIFGALIAGGGVYYFTHLEYV) form a helical membrane-spanning segment. The Mitochondrial intermembrane segment spans residues 90–337 (PISNRRRFND…MLQSFKEVHW (248 aa)). H195 is a Zn(2+) binding site. Residue E196 is part of the active site. The Zn(2+) site is built by H199 and E250. A disulfide bridge links C265 with C321.

It belongs to the peptidase M48 family. It depends on Zn(2+) as a cofactor.

The protein resides in the mitochondrion inner membrane. Its activity is regulated as follows. Protease activity is induced in response to various mitochondrial stress. In terms of biological role, protease that is part of the quality control system in the inner membrane of mitochondria. Cleaves and thereby promotes the turnover of mistranslated or misfolded membrane protein. The protein is Mitochondrial metalloendopeptidase OMA1 of Schizosaccharomyces pombe (strain 972 / ATCC 24843) (Fission yeast).